A 1113-amino-acid chain; its full sequence is Antigenic protein P1 (1113 aa).

The chain crosses the membrane as a helical span at residues 7-27; sequence IIAVVAIASAIVTGVVVIVVV. 17 N-linked (GlcNAc...) asparagine glycosylation sites follow: Asn-121, Asn-207, Asn-225, Asn-233, Asn-274, Asn-533, Asn-576, Asn-622, Asn-675, Asn-679, Asn-730, Asn-753, Asn-880, Asn-899, Asn-907, Asn-972, and Asn-995. The 315-residue stretch at 159 to 473 folds into the Peptidase M60 domain; that stretch reads VFGQRAVAWA…SYVNMAHAFG (315 aa). The PA14 domain maps to 648 to 800; it reads LDPHQVEYEV…TEESSVDVSK (153 aa).

The protein localises to the membrane. The polypeptide is Antigenic protein P1 (Entamoeba histolytica (strain ATCC 30459 / HM-1:IMSS / ABRM)).